A 1351-amino-acid polypeptide reads, in one-letter code: MSKRQKEFHDSLANEKTRVRLYKSGKNWVKSGIKEIEMFKIMGLPFISHSLVSQDNQSISKKITGYGLKTTAVIGGAFTVNMLHDQQAFAASDAPLTSELNTQSETVGNQNSTTIEASTSTTDSTSVTKNSSSEQTSNSDTVSSEKSENVTSTTNSTSNQQEKLTSTSESTSPKNTTSSSDTKSVTSISSTDQQTNTSTNQSTASNTTSQSTTPASANLNKTSTTSTSTAPIKLRTFSRLAMSTFASAATTSAVTANTITVNKDNLKQYMTTSGNATYDQSTGIVTLTQDAYSQKGAITLGTRIDSNKSFHFSGKVNLGNKYEGNGNGGDGIGFAFSPGVLGETGLNGAAVGIGGLSNAFGFKLDTYHNTSKPNAAAKANADPSNVAGGGAFGAFVTTDSYGVATTYTSSSAADNAAKLKVQPTNNTFQDFDINYNGDTKVMTVTYAGQTWTRNISDWIAKSGTTNFSLSMTASTGGATNLQQVQFGTFEYTESAVTQVRYVDVTTGKDIIPPKTYSGNVDQVVTIDNQQSALTAKGYNYTSVDSSYASTYNDTNKTVKMTNAGQSVTYYFTDVKAPTVTVGNQTIEVGKTMNPIVLTTTDNGTGTVTNTVTGLPSGLSYDSATNSIIGTPTKIGQSTVTVVSTDQANNKSTTTFTINVVDTTAPTVTPIGDQSSEVYSPISPIKIATQDNSGNAVTNTVTGLPSGLTFDSTNNTISGTPTNIGTSTITIVSTDASGNKTTTTFKYEVTRNSMSDSVSTSGSTQQSQSVSTSKADSQSASTSTSGSIVVSTSASTSKSTSVSLSDSVSASKSLSTSESNSVSSSTSTSLVNSQSVSSSMSGSVSKSTSLSDSISNSSSTEKSESLSTSTSDSLRTSTSLSDSVSMSTSGSLSKSQSLSTSTSDSASTSQSVSDSTSNSISTSESLSESASTSDSISISNSIANSQSASTSKSDSQSTSISLSTSDSKSMSTSESLSDSTSTSDSVSGSLSIATSQSVSTSSSDSMSTSEMISDSMSTSGSLAASDSKSMSVSSSMSTSQSGSTSESLSDSISTSDSDSKSLSLSTSQSGSTSTSTSTSSSVRTSESQSTSGSMSASQFDSTSISTSFSDSTSDSKSASTASSESISQSVSTSTSGSTSGSTSTSTSESLSMSGSDSTSVSDSTSMSESDSTSVSMSQDKSDSTSISDSESVSTSTSMSLSTSDSTSTSESLSTSMSGSQSISDSTSTSMSNSTSMSNSTSTSMSGSTSTSESNSMHPSDSMSMHHTHSTSTSRSSSEATTSTSESQSTLSATSEVTKHNGTPAQSEKRLPDTGDSIKQNGLLGGVMTLLVGLGLMKRKKKKDENDQDDSQA.

A signal peptide spans 1-89; it reads MSKRQKEFHD…VNMLHDQQAF (89 aa). Residues 90–230 are serine-rich repeat region 1, SRR1; it reads AASDAPLTSE…KTSTTSTSTA (141 aa). Polar residues predominate over residues 100–111; the sequence is LNTQSETVGNQN. 2 disordered regions span residues 100–228 and 751–1323; these read LNTQ…TSTS and NSMS…GLLG. Composition is skewed to low complexity over residues 112–133 and 149–228; these read STTI…NSSS and NVTS…TSTS. Residues 231-751 are non-repeat region (NRR); that stretch reads PIKLRTFSRL…TTFKYEVTRN (521 aa). A compositionally biased stretch (low complexity) spans 752–1294; the sequence is SMSDSVSTSG…SQSTLSATSE (543 aa). Residues 752-1312 are serine-rich repeat region 1, SRR1; the sequence is SMSDSVSTSG…AQSEKRLPDT (561 aa). The LPXTG sorting signal signature appears at 1309-1313; the sequence is LPDTG. T1312 is subject to Pentaglycyl murein peptidoglycan amidated threonine. Positions 1313–1351 are cleaved as a propeptide — removed by sortase; sequence GDSIKQNGLLGGVMTLLVGLGLMKRKKKKDENDQDDSQA.

It belongs to the serine-rich repeat protein (SRRP) family. Post-translationally, proteolytically cleaved by a metalloprotease. In terms of processing, glycosylated. It is probable that most of the Ser residues in SSR1 and SSR2 are O-GlcNAcylated. Sequential glycosylation by sugar transferases are able to generate complex sugar polymorphisms.

It is found in the secreted. It localises to the cell wall. Functionally, mediates binding to human platelets, possibly through a receptor-ligand interaction. Probably associated with virulence in endovascular infection. The protein is Serine-rich adhesin for platelets (sasA) of Staphylococcus aureus (strain MRSA252).